Here is an 81-residue protein sequence, read N- to C-terminus: Antimicrobial peptide D2 (81 aa).

The signal sequence occupies residues 1-31 (MAKTVLGIHVTFLTLLFAVILLNDVMYTPVE). Disulfide bonds link Cys34/Cys81, Cys45/Cys66, Cys51/Cys75, and Cys55/Cys77.

Its function is as follows. Antimicrobial peptide probably active against fungi like B.sorokiniana, F.oxysporum, F.graminearum, F.avenaceum, B.cinerea, P.beta, P.infestans and P.debaryanum. The polypeptide is Antimicrobial peptide D2 (Stellaria media (Common chickweed)).